Consider the following 110-residue polypeptide: Heat shock protein Hsp-12.2 (110 aa).

A sHSP domain is found at 15–110 (DWPLQHNDGV…VLTITASKKA (96 aa)).

The protein belongs to the small heat shock protein (HSP20) family.

The polypeptide is Heat shock protein Hsp-12.2 (hsp-12.2) (Caenorhabditis elegans).